The sequence spans 289 residues: Coiled-coil domain-containing protein 137 (289 aa).

3 disordered regions span residues 1–64 (MAGA…QEIP), 149–184 (EVQA…EKAA), and 204–225 (QPPE…GRRS). The span at 7 to 20 (GAAVSRVQAGPGSP) shows a compositional bias: low complexity. The residue at position 19 (Ser19) is a Phosphoserine. Residues 155–197 (KEKSEQKKAKKAFQKRRLDKVRRKKEEKAADRLEQELLRDTVK) are a coiled coil. The span at 162 to 177 (KAKKAFQKRRLDKVRR) shows a compositional bias: basic residues. Ser233 is subject to Phosphoserine. Residues 247–273 (RQRIVEEERERAVQAYRALKQRQQQLH) adopt a coiled-coil conformation. The tract at residues 265–289 (LKQRQQQLHGERPHLTSRKKPEPQL) is disordered. Positions 273–289 (HGERPHLTSRKKPEPQL) are enriched in basic and acidic residues.

The protein localises to the chromosome. The sequence is that of Coiled-coil domain-containing protein 137 (CCDC137) from Homo sapiens (Human).